Reading from the N-terminus, the 458-residue chain is Cysteine--tRNA ligase (458 aa).

Residue C29 participates in Zn(2+) binding. Residues 31 to 41 (PTVYDFLHIGN) carry the 'HIGH' region motif. C211, H236, and E240 together coordinate Zn(2+). A 'KMSKS' region motif is present at residues 269-273 (KMSKS). ATP is bound at residue K272.

It belongs to the class-I aminoacyl-tRNA synthetase family. As to quaternary structure, monomer. Zn(2+) is required as a cofactor.

It is found in the cytoplasm. It catalyses the reaction tRNA(Cys) + L-cysteine + ATP = L-cysteinyl-tRNA(Cys) + AMP + diphosphate. The sequence is that of Cysteine--tRNA ligase from Beijerinckia indica subsp. indica (strain ATCC 9039 / DSM 1715 / NCIMB 8712).